A 381-amino-acid polypeptide reads, in one-letter code: Heterogeneous nuclear rnp K-like protein 2 (381 aa).

The tract at residues 1–34 (MSQFFEAATPVAIPTNNTNGGSSDAGSAATGGAP) is disordered. A compositionally biased stretch (low complexity) spans 15–33 (TNNTNGGSSDAGSAATGGA). KH domains follow at residues 43-107 (TINH…IGDI), 156-221 (IGYV…LIEI), and 258-326 (NTRI…ESML). Residues 344–381 (LEAAEGDATVVTERSDSASFLEEKEEPQKNHDNKEEQS) form a disordered region. Phosphoserine is present on residues serine 358, serine 360, and serine 362. Residues 369–381 (EPQKNHDNKEEQS) are compositionally biased toward basic and acidic residues.

The protein belongs to the HEK2 family. Binds RNA. Post-translationally, phosphorylated by the plasma membrane-Anchored casein kinase YCK1. Phosphorylation at its C-terminus reduces its RNA-binding capacity.

The protein resides in the cytoplasm. It is found in the P-body. The protein localises to the nucleus. Its subcellular location is the chromosome. It localises to the telomere. Its function is as follows. RNA-binding protein involved in the correct localization of transcripts in the cell. RNA localization is a widespread mechanism for achieving localized protein synthesis. Required for the asymmetric localization to the daughter cell nucleus of the ASH1 transcript, coding for a specific repressor of transcription. Overexpression inhibits translation of the ASH1 transcript. Involved in the stability of transcripts, like the MTL1 mRNA. Involved in structural and functional organization of telomeric chromatin and regulates silencing at the HMR locus. This chain is Heterogeneous nuclear rnp K-like protein 2 (HEK2), found in Saccharomyces cerevisiae (strain JAY291) (Baker's yeast).